The primary structure comprises 373 residues: MRMEDEDYNTSISYGDEYPDYLDSIVVLEDLSPLEARVTRIFLVVVYSIVCFLGILGNGLVIIIATFKMKKTVNMVWFLNLAVADFLFNVFLPIHITYAAMDYHWVFGTAMCKISNFLLIHNMFTSVFLLTIISSDRCISVLLPVWSQNHRSVRLAYMACMVIWVLAFFLSSPSLVFRDTANLHGKISCFNNFSLSTPGSSSWPTHSQMDPVGYSRHMVVTVTRFLCGFLVPVLIITACYLTIVCKLQRNRLAKTKKPFKIIVTIIITFFLCWCPYHTLNLLELHHTAMPGSVFSLGLPLATALAIANSCMNPILYVFMGQDFKKFKVALFSRLVNALSEDTGHSSYPSHRSFTKMSSMNERTSMNERETGML.

Topologically, residues 1-41 are extracellular; that stretch reads MRMEDEDYNTSISYGDEYPDYLDSIVVLEDLSPLEARVTRI. N-linked (GlcNAc...) asparagine glycosylation occurs at N9. Residues 42-64 traverse the membrane as a helical segment; the sequence is FLVVVYSIVCFLGILGNGLVIII. The Cytoplasmic portion of the chain corresponds to 65–75; the sequence is ATFKMKKTVNM. A helical membrane pass occupies residues 76-97; the sequence is VWFLNLAVADFLFNVFLPIHIT. Topologically, residues 98–114 are extracellular; that stretch reads YAAMDYHWVFGTAMCKI. Residues C112 and C189 are joined by a disulfide bond. The helical transmembrane segment at 115–135 threads the bilayer; sequence SNFLLIHNMFTSVFLLTIISS. The Cytoplasmic portion of the chain corresponds to 136–154; sequence DRCISVLLPVWSQNHRSVR. The chain crosses the membrane as a helical span at residues 155–176; it reads LAYMACMVIWVLAFFLSSPSLV. Over 177–224 the chain is Extracellular; the sequence is FRDTANLHGKISCFNNFSLSTPGSSSWPTHSQMDPVGYSRHMVVTVTR. N192 is a glycosylation site (N-linked (GlcNAc...) asparagine). Residues 225 to 245 form a helical membrane-spanning segment; it reads FLCGFLVPVLIITACYLTIVC. The Cytoplasmic portion of the chain corresponds to 246–261; sequence KLQRNRLAKTKKPFKI. The helical transmembrane segment at 262-282 threads the bilayer; the sequence is IVTIIITFFLCWCPYHTLNLL. The Extracellular portion of the chain corresponds to 283 to 300; it reads ELHHTAMPGSVFSLGLPL. Residues 301-320 form a helical membrane-spanning segment; sequence ATALAIANSCMNPILYVFMG. Residues 321–373 are Cytoplasmic-facing; the sequence is QDFKKFKVALFSRLVNALSEDTGHSSYPSHRSFTKMSSMNERTSMNERETGML. S339 bears the Phosphoserine mark. The disordered stretch occupies residues 341–373; that stretch reads DTGHSSYPSHRSFTKMSSMNERTSMNERETGML. A Phosphothreonine modification is found at T342. Positions 344–363 are enriched in polar residues; that stretch reads HSSYPSHRSFTKMSSMNERT. S349, S352, and S358 each carry phosphoserine. The segment covering 364–373 has biased composition (basic and acidic residues); it reads SMNERETGML.

The protein belongs to the chemokine-like receptor (CMKLR) family. Prominently expressed in developing osseous and cartilaginous tissue. Also found in adult parathyroid glands. Expressed in cardiovascular system, brain, kidney, gastrointestinal tissues and myeloid tissues. Expressed in a broad array of tissues associated with hematopoietic and immune function including, spleen, thymus, appendix, lymph node, bone marrow and fetal liver. Among leukocyte populations abundant expression in monocyte-derived macrophage and immature dendritic cells (DCs). High expression in blood monocytes and low levels in polymorphonuclear cells and T-cells. Expressed on endothelial cells. Highly expressed in differentiating adipocytes.

It localises to the cell membrane. In terms of biological role, receptor for the chemoattractant adipokine chemerin/RARRES2 and for the omega-3 fatty acid derived molecule resolvin E1. Interaction with RARRES2 initiates activation of G proteins G(i)/G(o) and beta-arrestin pathways inducing cellular responses via second messenger pathways such as intracellular calcium mobilization, phosphorylation of MAP kinases MAPK1/MAPK3 (ERK1/2), TYRO3, MAPK14/P38MAPK and PI3K leading to multifunctional effects, like reduction of immune responses, enhancing of adipogenesis and angionesis. Resolvin E1 down-regulates cytokine production in macrophages by reducing the activation of MAPK1/3 (ERK1/2) and NF-kappa-B. Positively regulates adipogenesis and adipocyte metabolism. Functionally, (Microbial infection) Acts as a coreceptor for several SIV strains (SIVMAC316, SIVMAC239, SIVMACL7E-FR and SIVSM62A), as well as a primary HIV-1 strain (92UG024-2). The protein is Chemerin-like receptor 1 of Homo sapiens (Human).